The primary structure comprises 242 residues: Ribose-5-phosphate isomerase A (242 aa).

Substrate-binding positions include 39-42 (SGST), 95-98 (DGAD), and 108-111 (KGGG). E117 functions as the Proton acceptor in the catalytic mechanism. K135 serves as a coordination point for substrate.

Belongs to the ribose 5-phosphate isomerase family. As to quaternary structure, homodimer.

It carries out the reaction aldehydo-D-ribose 5-phosphate = D-ribulose 5-phosphate. It functions in the pathway carbohydrate degradation; pentose phosphate pathway; D-ribose 5-phosphate from D-ribulose 5-phosphate (non-oxidative stage): step 1/1. Catalyzes the reversible conversion of ribose-5-phosphate to ribulose 5-phosphate. The polypeptide is Ribose-5-phosphate isomerase A (Chlamydia trachomatis serovar A (strain ATCC VR-571B / DSM 19440 / HAR-13)).